We begin with the raw amino-acid sequence, 1705 residues long: Homeobox-DDT domain protein RLT1 (1705 aa).

Disordered stretches follow at residues 1–53 (MEMG…QLET), 118–167 (ELPA…EYET), 237–267 (HDPRPRRSHAAARSFHEQQSLDDPSSFTPNM), 296–322 (GPVPRSYVTPGHASRNCSTSQQDMPSP), and 352–414 (GVRK…RKEE). A DNA-binding region (homeobox) is located at residues 39–98 (VKPKRQMKTPFQLETLEKVYSEEKYPSEATRAELSEKLDLSDRQLQMWFCHRRLKDKKDG). Over residues 136–159 (GSESGCSPYSNSRRNFASGSSSSR) the composition is skewed to low complexity. Polar residues-rich tracts occupy residues 253–265 (EQQSLDDPSSFTP) and 310–319 (RNCSTSQQDM). The region spanning 549-608 (DETVGNLLMVWRFLISFSDVLDLWPFTLDEFIQAFHDYDSRLLGEIHVTLLRSIIRDVED) is the DDT domain. Residues 731–800 (GTVKFAAFHV…APSTYCVRAP (70 aa)) form the HTH HARE-type domain. Disordered regions lie at residues 1028-1053 (TRERDSFDRDPSQLLDETKPLEDLSN), 1198-1229 (VNHSPTDSVSPSSSAISGSNSDSMETSTSIRV), 1441-1502 (PEDE…KAQS), 1561-1635 (PKSE…FVDY), and 1652-1705 (AIEE…SSDS). Low complexity predominate over residues 1201 to 1220 (SPTDSVSPSSSAISGSNSDS). The span at 1455–1465 (SPFKGKGPREQ) shows a compositional bias: basic and acidic residues. Composition is skewed to acidic residues over residues 1565-1574 (EVEEDEEEEE), 1611-1628 (VDDESDNSVGVESEDEDG), and 1669-1684 (GEDDAEMSESSEDDDV).

In terms of assembly, interacts with CHR11 and CHR17. Interacts (via the DDT domain) with CHR11 (via C-terminus). Highly expressed in growing tissues such as inflorescence and flower meristems, young leaves and floral organs. Expressed in roots, rosette and cauline leaves, stems, flowers, inflorescences and siliques.

The protein resides in the nucleus. In terms of biological role, transcriptional regulator required for the maintenance of the plant vegetative phase. In association with CHR11 or CHR17 may prevent the early activation of the vegetative-to-reproductive transition by regulating key genes that contribute to flower timing, such as FT, SEP1, SEP3, AGL8/FUL, SOC1 and FLC. The sequence is that of Homeobox-DDT domain protein RLT1 from Arabidopsis thaliana (Mouse-ear cress).